The following is a 340-amino-acid chain: Phenylalanine--tRNA ligase alpha subunit (340 aa).

Glu-255 is a binding site for Mg(2+).

Belongs to the class-II aminoacyl-tRNA synthetase family. Phe-tRNA synthetase alpha subunit type 1 subfamily. Tetramer of two alpha and two beta subunits. Requires Mg(2+) as cofactor.

It localises to the cytoplasm. It catalyses the reaction tRNA(Phe) + L-phenylalanine + ATP = L-phenylalanyl-tRNA(Phe) + AMP + diphosphate + H(+). The chain is Phenylalanine--tRNA ligase alpha subunit from Exiguobacterium sibiricum (strain DSM 17290 / CCUG 55495 / CIP 109462 / JCM 13490 / 255-15).